We begin with the raw amino-acid sequence, 439 residues long: Xylose isomerase (439 aa).

Active-site residues include H101 and D104. Positions 232, 268, 271, 296, 307, 309, and 339 each coordinate Mg(2+).

This sequence belongs to the xylose isomerase family. In terms of assembly, homotetramer. The cofactor is Mg(2+).

The protein localises to the cytoplasm. The catalysed reaction is alpha-D-xylose = alpha-D-xylulofuranose. The chain is Xylose isomerase from Actinobacillus pleuropneumoniae serotype 5b (strain L20).